A 187-amino-acid polypeptide reads, in one-letter code: Putative manganese efflux pump MntP (187 aa).

The next 6 membrane-spanning stretches (helical) occupy residues 3–23, 41–61, 62–82, 107–129, 143–163, and 166–186; these read MSAT…ASIG, LIFG…GFFA, SQYI…ILGG, LLVC…LAFL, ATMI…PILG, and AEII…YEHL.

Belongs to the MntP (TC 9.B.29) family.

The protein resides in the cell inner membrane. Its function is as follows. Probably functions as a manganese efflux pump. The protein is Putative manganese efflux pump MntP of Pectobacterium atrosepticum (strain SCRI 1043 / ATCC BAA-672) (Erwinia carotovora subsp. atroseptica).